The primary structure comprises 218 residues: Ras-related protein Rab11E (218 aa).

Residue 20–27 (GDSGVGKS) participates in GTP binding. The Effector region motif lies at 42–50 (SKSTIGVEF). GTP is bound by residues 68 to 72 (DTAGQ) and 126 to 129 (NKSD). 2 S-geranylgeranyl cysteine lipidation sites follow: C215 and C216.

Belongs to the small GTPase superfamily. Rab family.

The protein localises to the cell membrane. In Lotus japonicus (Lotus corniculatus var. japonicus), this protein is Ras-related protein Rab11E (RAB11E).